A 1026-amino-acid chain; its full sequence is Multidrug resistance protein MdtC (1026 aa).

11 helical membrane-spanning segments follow: residues 15-35, 333-353, 360-380, 387-407, 431-451, 463-483, 528-548, 853-873, 897-917, 953-973, and 984-1004; these read ILIA…LPVA, EVEE…FLFL, LIPA…MYLC, LSLM…IVVL, VGFT…PLLL, FAVT…TLTP, LVGV…IAIP, LILI…LYES, LFNA…IGIV, PIMM…LSGG, and ITIV…TPVV.

This sequence belongs to the resistance-nodulation-cell division (RND) (TC 2.A.6) family. MdtC subfamily. In terms of assembly, part of a tripartite efflux system composed of MdtA, MdtB and MdtC. MdtC forms a heteromultimer with MdtB.

Its subcellular location is the cell inner membrane. This chain is Multidrug resistance protein MdtC, found in Salmonella gallinarum (strain 287/91 / NCTC 13346).